The primary structure comprises 23 residues: Septenin 2a (23 aa).

As to expression, expressed in skin glands.

It localises to the secreted. Its function is as follows. May act as an antimicrobial peptide. This is Septenin 2a from Osteopilus septentrionalis (Cuban treefrog).